The primary structure comprises 217 residues: N-(5'-phosphoribosyl)anthranilate isomerase (217 aa).

This sequence belongs to the TrpF family.

It catalyses the reaction N-(5-phospho-beta-D-ribosyl)anthranilate = 1-(2-carboxyphenylamino)-1-deoxy-D-ribulose 5-phosphate. It functions in the pathway amino-acid biosynthesis; L-tryptophan biosynthesis; L-tryptophan from chorismate: step 3/5. This is N-(5'-phosphoribosyl)anthranilate isomerase from Chlorobium phaeovibrioides (strain DSM 265 / 1930) (Prosthecochloris vibrioformis (strain DSM 265)).